Here is a 173-residue protein sequence, read N- to C-terminus: Lipoprotein signal peptidase (173 aa).

Helical transmembrane passes span 24 to 44, 55 to 75, 80 to 100, and 105 to 125; these read PWLG…IAIL, ITGF…SFLA, WQRW…VWLL, and GQKL…GNVI. Active-site residues include D135 and D153. A helical transmembrane segment spans residues 145 to 165; the sequence is HWPAFNVADCGICIGAVLLII.

This sequence belongs to the peptidase A8 family.

It is found in the cell inner membrane. The enzyme catalyses Release of signal peptides from bacterial membrane prolipoproteins. Hydrolyzes -Xaa-Yaa-Zaa-|-(S,diacylglyceryl)Cys-, in which Xaa is hydrophobic (preferably Leu), and Yaa (Ala or Ser) and Zaa (Gly or Ala) have small, neutral side chains.. Its pathway is protein modification; lipoprotein biosynthesis (signal peptide cleavage). In terms of biological role, this protein specifically catalyzes the removal of signal peptides from prolipoproteins. This chain is Lipoprotein signal peptidase, found in Ralstonia nicotianae (strain ATCC BAA-1114 / GMI1000) (Ralstonia solanacearum).